Here is a 331-residue protein sequence, read N- to C-terminus: MKSITQASFMKGIMFTFTIAIISYILAKFPILHTIGALAIAIIFAMIYRQVIGYPEHIRPGITFASKRLLKFAIILYGLKLNMGDILGKGWKLLLIDIIVIIFSISLTLLLNQIIKGNKDISILLGIGTGVCGAAAIAATAPILKSKEKDIAISVGIIALVGTIFALIYTAIEAIFNIPTITYGAWTGISLHEIAQVVLAAGIGGSEAMTFALLGKLGRVFLLIPLSIVLILYMRYKSHSSQVQQKIDIPYFLIGFIIMACINTFVPIPSLLMNIINVITTLCMLMAMVALGLNIVLKEVISKALKPFIVICITSICLSGVTLLVTSIMFK.

10 helical membrane passes run 7–26 (ASFM…SYIL), 31–48 (ILHT…AMIY), 69–88 (LLKF…DILG), 93–115 (LLLI…NQII), 122–144 (SILL…APIL), 154–176 (SVGI…EAIF), 183–205 (YGAW…GIGG), 249–271 (IPYF…IPSL), 275–297 (IINV…NIVL), and 308–330 (FIVI…SIMF).

This sequence belongs to the UPF0324 family.

It localises to the cell membrane. The sequence is that of UPF0324 membrane protein SERP0111 from Staphylococcus epidermidis (strain ATCC 35984 / DSM 28319 / BCRC 17069 / CCUG 31568 / BM 3577 / RP62A).